A 127-amino-acid chain; its full sequence is Large ribosomal subunit protein bL19 (127 aa).

Belongs to the bacterial ribosomal protein bL19 family.

Its function is as follows. This protein is located at the 30S-50S ribosomal subunit interface and may play a role in the structure and function of the aminoacyl-tRNA binding site. This Cupriavidus pinatubonensis (strain JMP 134 / LMG 1197) (Cupriavidus necator (strain JMP 134)) protein is Large ribosomal subunit protein bL19.